We begin with the raw amino-acid sequence, 1063 residues long: MATVPVYCICRLPYDVTQFMIECDACKDWFHGSCVGVDEDEAPDIDIYHCPNCEKTHGKSTLKKKKSWNKHDTGQSGDVRPVQNGSQVFIKELRSRTFPSSEDVVVKLSGSQLTLEYLEENGFNEPILIQKKDGLGMAMPAPTFYVSDVENYVGPDVLVDVVDVTKQTDSKMKLKEFVDYYYSTNRKKVLNVINLEFSDARMANIVESPQIVRKLSWVENYWPDDALLGKPKVSKYCLICVKDSYTDFHIECGGASVWYHVLKGEKIFFLIKPTSANLSLYERWRSSSNHSEMFFADQVDKCYKCTLKQGQTLFIPSGWINAILTPVDCLAFSGHFVHSLSVEMQMRAYEVEKRLKVASLTPFSNFETACWYVGKYYLEQFKGLHKANKQPPPYLVHGAKIVNGAFRSWTKKQALLEHEDELPENMKPAQLIKDLAKEIRIAEVKQVVSDSQNATKAIKSEPSNSKPPAEEPPSALSEPEEPMSPAHVSSPSGDKPARKKVPKPPKMPKAPKPPKEPKIKEGGKKKAKKVKEGVIPEKKPSSLAALESHAKDILNKMDQPKKLIKTGMSIMEKETNKPNDVKKFEMIREHNKNKTESKWKYKNSKPDSLLKMEEEHKFDKSLLSHKDNKFAFSLSNKKLLGSKMLKTQTNSSVFGSIQNIKEEKPKPVRDEYEYVSDEGELKIEEFPIRRKKNAVKREFSFLSNIKEPIQPSKKPKLPPSDMKSPDTSDEESLHIDTEAKTDVKGRNSKVSKKKGGSSAGILDLLQASKQVGGIDYSNNSQPPASPSTQEAIQGMLSMANLQSSDSCLQPFWSNSQAKNNSHSSAASKKPSGAAGAGGNSKRPAKRLPKKTQKSSSVDSSDMFDDDQDHLEACFKDSDYVYPSLESEEDNPIFKSRSKKRKNTDDTPYSPTARVGPTVPRQERPAREGARVASIETGLAAAAAKLSHQEEQKIKKKKKSAKKKPIVAEESHKLSHDSSSPEPTPDSESNMADHEYSTGTGKSAGGSQPMAPGVFLSHRRPSSSSSSQNASSVLPAKRLKKGMATAKQRLGKILKIHRNGKLLL.

The PHD-type zinc-finger motif lies at 5–56 (PVYCICRLPYDVTQFMIECDACKDWFHGSCVGVDEDEAPDIDIYHCPNCEKT). The region spanning 197 to 353 (FSDARMANIV…MQMRAYEVEK (157 aa)) is the JmjC domain. Thr246 contacts 2-oxoglutarate. Fe cation contacts are provided by His249 and Glu251. Positions 259 and 266 each coordinate 2-oxoglutarate. Residue Asn321 coordinates Fe cation. Disordered regions lie at residues 448-546 (VSDS…LAAL), 704-761 (NIKE…SAGI), 773-864 (GIDY…DMFD), and 879-1045 (YVYP…MATA). Residues 460 to 477 (SEPSNSKPPAEEPPSALS) show a composition bias toward low complexity. Composition is skewed to basic and acidic residues over residues 513-540 (PPKE…EKKP) and 723-745 (KSPD…DVKG). Residues 746–755 (RNSKVSKKKG) are compositionally biased toward basic residues. A compositionally biased stretch (polar residues) spans 776-791 (YSNNSQPPASPSTQEA). Over residues 813–833 (SNSQAKNNSHSSAASKKPSGA) the composition is skewed to low complexity. Residues 842 to 852 (RPAKRLPKKTQ) are compositionally biased toward basic residues. The span at 920–929 (RQERPAREGA) shows a compositional bias: basic and acidic residues. Over residues 953-964 (IKKKKKSAKKKP) the composition is skewed to basic residues. Positions 965 to 975 (IVAEESHKLSH) are enriched in basic and acidic residues. Composition is skewed to low complexity over residues 976-988 (DSSS…DSES) and 1021-1031 (SSSSSSQNASS). Ser1021 bears the Phosphoserine; by PKA mark.

This sequence belongs to the JHDM1 histone demethylase family. JHDM1D subfamily.

It localises to the nucleus. It is found in the nucleolus. The protein localises to the chromosome. The protein resides in the centromere. Its subcellular location is the kinetochore. In terms of biological role, lysine demethylase that demethylates both histones and non-histone proteins. Mediates demethylation of dimethylated 'Lys-9' of histone H3 (H3K9me2). Recruited to trimethylated 'Lys-4' of histone H3 (H3K4me3) at rDNA promoters and promotes expression of rDNA. The chain is Lysine-specific demethylase phf2 (phf2) from Danio rerio (Zebrafish).